Consider the following 395-residue polypeptide: S-adenosylmethionine synthase (395 aa).

His-15 is an ATP binding site. Asp-17 contacts Mg(2+). Position 43 (Glu-43) interacts with K(+). Gln-99 lines the L-methionine pocket. The segment at 99 to 109 (QSPDIAMGVNE) is flexible loop. Residues 174–176 (DGK), 240–241 (RF), Asp-249, 255–256 (RK), Ala-272, and Lys-276 each bind ATP. Asp-249 serves as a coordination point for L-methionine. Lys-280 lines the L-methionine pocket.

The protein belongs to the AdoMet synthase family. As to quaternary structure, homotetramer; dimer of dimers. It depends on Mg(2+) as a cofactor. K(+) serves as cofactor.

It localises to the cytoplasm. The catalysed reaction is L-methionine + ATP + H2O = S-adenosyl-L-methionine + phosphate + diphosphate. Its pathway is amino-acid biosynthesis; S-adenosyl-L-methionine biosynthesis; S-adenosyl-L-methionine from L-methionine: step 1/1. In terms of biological role, catalyzes the formation of S-adenosylmethionine (AdoMet) from methionine and ATP. The overall synthetic reaction is composed of two sequential steps, AdoMet formation and the subsequent tripolyphosphate hydrolysis which occurs prior to release of AdoMet from the enzyme. The polypeptide is S-adenosylmethionine synthase (Moorella thermoacetica (strain ATCC 39073 / JCM 9320)).